Here is a 345-residue protein sequence, read N- to C-terminus: Phosphoribosylformylglycinamidine cyclo-ligase (345 aa).

This sequence belongs to the AIR synthase family.

The protein localises to the cytoplasm. It catalyses the reaction 2-formamido-N(1)-(5-O-phospho-beta-D-ribosyl)acetamidine + ATP = 5-amino-1-(5-phospho-beta-D-ribosyl)imidazole + ADP + phosphate + H(+). It participates in purine metabolism; IMP biosynthesis via de novo pathway; 5-amino-1-(5-phospho-D-ribosyl)imidazole from N(2)-formyl-N(1)-(5-phospho-D-ribosyl)glycinamide: step 2/2. This chain is Phosphoribosylformylglycinamidine cyclo-ligase, found in Salmonella choleraesuis (strain SC-B67).